The sequence spans 460 residues: Putative E3 ubiquitin-protein ligase RING1b (460 aa).

The disordered stretch occupies residues 1–85; it reads MPSLKSFSAA…SQSSSAGELS (85 aa). The segment covering 21-31 has biased composition (basic and acidic residues); that stretch reads SEAERFNPEAV. Acidic residues-rich tracts occupy residues 32-51 and 59-71; these read EKEEDPDKMDEKDESGDEED and EAEDEEALGEEED. An RING-type zinc finger spans residues 103 to 143; that stretch reads CSICLGIIRKTRTVMECLHRFCRECIDKSMRLGNNECPTCR. Positions 196–300 are disordered; it reads QVSQRQSKAL…TEQTHQRDSR (105 aa). A compositionally biased stretch (basic residues) spans 220–234; it reads RSRRSGGGSRRRRNC. Acidic residues predominate over residues 240 to 249; the sequence is DTSEANDDDD. Over residues 250-265 the composition is skewed to basic and acidic residues; the sequence is QNKRGKDSSSDEPCER. Over residues 276 to 290 the composition is skewed to low complexity; the sequence is SSSNANNNDNCAGNG.

As to quaternary structure, heterodimer with RING1A. Interacts with CLF. Component of the PRC1-like complex, at least composed of RING1A, RING1B and LHP1.

The protein resides in the nucleus. It carries out the reaction S-ubiquitinyl-[E2 ubiquitin-conjugating enzyme]-L-cysteine + [acceptor protein]-L-lysine = [E2 ubiquitin-conjugating enzyme]-L-cysteine + N(6)-ubiquitinyl-[acceptor protein]-L-lysine.. It participates in protein modification; protein ubiquitination. Putative E3 ubiquitin-protein ligase that mediates monoubiquitination of 'Lys-119' of histone H2A (H2AK119ub), thereby playing a central role in histone code and gene regulation. Functionally, as part of the PRC1-like complex, repress class I KNOX gene expression. PcG PRC1 complex maintains the transcriptionally repressive state of many genes, including Hox genes, throughout development. PcG PRC1 complex acts via chromatin remodeling and modification of histones, rendering chromatin heritably changed in its expressibility. The sequence is that of Putative E3 ubiquitin-protein ligase RING1b (RING1B) from Arabidopsis thaliana (Mouse-ear cress).